The chain runs to 493 residues: Farnesoate epoxidase (493 aa).

The N-terminal stretch at 1-24 is a signal peptide; sequence MLALIVLCFILFFYIISRRHRGLC. Position 433 (Cys-433) interacts with heme.

The protein belongs to the cytochrome P450 family. The cofactor is heme. In terms of tissue distribution, constitutively expressed in corpora allata from the first instar larval to adult stages.

It catalyses the reaction (2E,6E)-farnesoate + reduced [NADPH--hemoprotein reductase] + O2 = juvenile hormone III carboxylate + oxidized [NADPH--hemoprotein reductase] + H2O + H(+). Its function is as follows. Catalyzes the conversion of farnesoate to juvenile hormone III acid in juvenile hormone biosynthesis. This Bombyx mori (Silk moth) protein is Farnesoate epoxidase.